Consider the following 144-residue polypeptide: MAKKIIGYIKLQIPAGKANPSPPVGPALGQRGLNIMEFCKAFNAATQGMEPGLPIPVVITAFADKSFTFVMKTPPASILLKKAAGLQKGSSNPLTNKVGKLTRAQLEEIAKTKDPDLTAADLDAAVRTIAGSARSMGLDVEGVV.

Belongs to the universal ribosomal protein uL11 family. Part of the ribosomal stalk of the 50S ribosomal subunit. Interacts with L10 and the large rRNA to form the base of the stalk. L10 forms an elongated spine to which L12 dimers bind in a sequential fashion forming a multimeric L10(L12)X complex. One or more lysine residues are methylated.

Its function is as follows. Forms part of the ribosomal stalk which helps the ribosome interact with GTP-bound translation factors. The chain is Large ribosomal subunit protein uL11 from Neisseria meningitidis serogroup B (strain ATCC BAA-335 / MC58).